Consider the following 279-residue polypeptide: Probable thymidylate synthase (279 aa).

Residues R21 and 136 to 137 (RR) each bind dUMP. Catalysis depends on C156, which acts as the Nucleophile. Residues 177 to 180 (RSVD), N188, and 218 to 220 (HIY) contribute to the dUMP site. D180 is a binding site for (6R)-5,10-methylene-5,6,7,8-tetrahydrofolate.

It belongs to the thymidylate synthase family.

It catalyses the reaction dUMP + (6R)-5,10-methylene-5,6,7,8-tetrahydrofolate = 7,8-dihydrofolate + dTMP. In terms of biological role, sythesizes the thymine necessary for the viral DNA replication. The sequence is that of Probable thymidylate synthase from Escherichia coli (Enterobacteria phage T5).